Reading from the N-terminus, the 320-residue chain is Very-long-chain 3-oxoacyl-CoA reductase (320 aa).

Residues 17–37 (FWYLGVVAAVWWGLRAAWCLL) form a helical membrane-spanning segment. Position 56–85 (56–85 (GKWAVVTGATDGIGKAYAEELAKRGMNIVL)) interacts with NADP(+). 2 helical membrane passes run 189–209 (GVIL…LTVY) and 283–303 (AIMG…SLGM). Serine 196 is a substrate binding site. The active-site Proton acceptor is the tyrosine 209.

The protein belongs to the short-chain dehydrogenases/reductases (SDR) family. 17-beta-HSD 3 subfamily.

The protein resides in the endoplasmic reticulum membrane. It carries out the reaction a very-long-chain (3R)-3-hydroxyacyl-CoA + NADP(+) = a very-long-chain 3-oxoacyl-CoA + NADPH + H(+). The catalysed reaction is 17beta-estradiol + NAD(+) = estrone + NADH + H(+). The enzyme catalyses 17beta-estradiol + NADP(+) = estrone + NADPH + H(+). It catalyses the reaction 3-oxooctadecanoyl-CoA + NADPH + H(+) = (3R)-hydroxyoctadecanoyl-CoA + NADP(+). It carries out the reaction (7Z,10Z,13Z,16Z)-3-oxodocosatetraenoyl-CoA + NADPH + H(+) = (3R)-hydroxy-(7Z,10Z,13Z,16Z)-docosatetraenoyl-CoA + NADP(+). The catalysed reaction is 3-oxo-(7Z,10Z,13Z,16Z,19Z)-docosapentaenoyl-CoA + NADPH + H(+) = (3R)-hydroxy-(7Z,10Z,13Z,16Z,19Z)-docosapentaenoyl-CoA + NADP(+). The enzyme catalyses (8Z,11Z,14Z)-3-oxoeicosatrienoyl-CoA + NADPH + H(+) = (3R)-hydroxy-(8Z,11Z,14Z)-eicosatrienoyl-CoA + NADP(+). It participates in lipid metabolism; fatty acid biosynthesis. It functions in the pathway steroid biosynthesis; estrogen biosynthesis. Catalyzes the second of the four reactions of the long-chain fatty acids elongation cycle. This endoplasmic reticulum-bound enzymatic process, allows the addition of two carbons to the chain of long- and very long-chain fatty acids/VLCFAs per cycle. This enzyme has a 3-ketoacyl-CoA reductase activity, reducing 3-ketoacyl-CoA to 3-hydroxyacyl-CoA, within each cycle of fatty acid elongation. Thereby, it may participate in the production of VLCFAs of different chain lengths that are involved in multiple biological processes as precursors of membrane lipids and lipid mediators. May also catalyze the transformation of estrone (E1) into estradiol (E2) and play a role in estrogen formation. The chain is Very-long-chain 3-oxoacyl-CoA reductase (hsd17b12) from Xenopus tropicalis (Western clawed frog).